Consider the following 336-residue polypeptide: Glyceraldehyde-3-phosphate dehydrogenase (336 aa).

Residues 12–13 (RI), Asp34, and Met79 each bind NAD(+). D-glyceraldehyde 3-phosphate contacts are provided by residues 150-152 (SCT), Thr181, 210-211 (TG), and Arg233. Cys151 (nucleophile) is an active-site residue. Asn316 is a binding site for NAD(+).

The protein belongs to the glyceraldehyde-3-phosphate dehydrogenase family. In terms of assembly, homotetramer.

The protein resides in the cytoplasm. The catalysed reaction is D-glyceraldehyde 3-phosphate + phosphate + NAD(+) = (2R)-3-phospho-glyceroyl phosphate + NADH + H(+). The protein operates within carbohydrate degradation; glycolysis; pyruvate from D-glyceraldehyde 3-phosphate: step 1/5. This Echinococcus multilocularis (Fox tapeworm) protein is Glyceraldehyde-3-phosphate dehydrogenase.